Consider the following 156-residue polypeptide: Small ribosomal subunit protein uS7 (156 aa).

It belongs to the universal ribosomal protein uS7 family. As to quaternary structure, part of the 30S ribosomal subunit. Contacts proteins S9 and S11.

Functionally, one of the primary rRNA binding proteins, it binds directly to 16S rRNA where it nucleates assembly of the head domain of the 30S subunit. Is located at the subunit interface close to the decoding center, probably blocks exit of the E-site tRNA. This is Small ribosomal subunit protein uS7 from Bordetella bronchiseptica (strain ATCC BAA-588 / NCTC 13252 / RB50) (Alcaligenes bronchisepticus).